Reading from the N-terminus, the 134-residue chain is NADH-quinone oxidoreductase subunit A (134 aa).

A run of 3 helical transmembrane segments spans residues 14-34 (FFMF…LSWI), 66-86 (FYLI…LYAW), and 96-116 (IGFS…FYLV).

The protein belongs to the complex I subunit 3 family. NDH-1 is composed of 13 different subunits. Subunits NuoA, H, J, K, L, M, N constitute the membrane sector of the complex.

Its subcellular location is the cell membrane. It catalyses the reaction a quinone + NADH + 5 H(+)(in) = a quinol + NAD(+) + 4 H(+)(out). In terms of biological role, NDH-1 shuttles electrons from NADH, via FMN and iron-sulfur (Fe-S) centers, to quinones in the respiratory chain. The immediate electron acceptor for the enzyme in this species is believed to be ubiquinone. Couples the redox reaction to proton translocation (for every two electrons transferred, four hydrogen ions are translocated across the cytoplasmic membrane), and thus conserves the redox energy in a proton gradient. The polypeptide is NADH-quinone oxidoreductase subunit A (Buchnera aphidicola subsp. Acyrthosiphon pisum (strain APS) (Acyrthosiphon pisum symbiotic bacterium)).